Reading from the N-terminus, the 289-residue chain is Phosphatidylinositol:ceramide inositolphosphotransferase 3 (289 aa).

Helical transmembrane passes span 33–53 (LVLA…GVHY), 77–97 (AFFS…WTFH), 115–135 (VFVY…ATQL), 169–189 (VIYG…LVFV), and 199–219 (RWIK…IIAS). Residue His-181 is part of the active site. Active-site residues include His-222 and Asp-226. Residues 223-243 (YTVDIVVAWYTVNLVMFYVDS) traverse the membrane as a helical segment. Residues 249 to 289 (AERSSGPSPTPLLPLSTKDSKNKSKEDHQRLLNENNVADDH) form a disordered region. Positions 266–279 (KDSKNKSKEDHQRL) are enriched in basic and acidic residues. Residues 280-289 (LNENNVADDH) show a composition bias toward polar residues.

This sequence belongs to the sphingomyelin synthase family. In terms of tissue distribution, mostly expressed in stems and flowers, and, to a lower extent, in leaves, roots and siliques.

Its subcellular location is the membrane. Functionally, catalyzes the transfer of the phosphorylinositol group from phosphatidylinositol (PI) to phytoceramide, an essential step in sphingolipid biosynthesis. The polypeptide is Phosphatidylinositol:ceramide inositolphosphotransferase 3 (IPCS3) (Arabidopsis thaliana (Mouse-ear cress)).